Here is a 72-residue protein sequence, read N- to C-terminus: Translation initiation factor IF-1 (72 aa).

The S1-like domain maps to 1–72 (MAKDDVIEVE…TRGRITYRYK (72 aa)). Y60 is modified (phosphotyrosine).

Belongs to the IF-1 family. In terms of assembly, component of the 30S ribosomal translation pre-initiation complex which assembles on the 30S ribosome in the order IF-2 and IF-3, IF-1 and N-formylmethionyl-tRNA(fMet); mRNA recruitment can occur at any time during PIC assembly.

The protein localises to the cytoplasm. Functionally, one of the essential components for the initiation of protein synthesis. Stabilizes the binding of IF-2 and IF-3 on the 30S subunit to which N-formylmethionyl-tRNA(fMet) subsequently binds. Helps modulate mRNA selection, yielding the 30S pre-initiation complex (PIC). Upon addition of the 50S ribosomal subunit IF-1, IF-2 and IF-3 are released leaving the mature 70S translation initiation complex. The polypeptide is Translation initiation factor IF-1 (Geobacillus kaustophilus (strain HTA426)).